A 393-amino-acid chain; its full sequence is Putative mitochondrial cysteine synthase (393 aa).

Residues 12–31 form a helical membrane-spanning segment; it reads LAWRECISIASVLIGAYASY. Lys86 carries the post-translational modification N6-(pyridoxal phosphate)lysine. Pyridoxal 5'-phosphate is bound by residues 230 to 234 and Ser338; that span reads GTGGT.

It belongs to the cysteine synthase/cystathionine beta-synthase family. The cofactor is pyridoxal 5'-phosphate.

The protein resides in the mitochondrion. It localises to the mitochondrion outer membrane. The enzyme catalyses O-acetyl-L-serine + hydrogen sulfide = L-cysteine + acetate. Functionally, putative cysteine synthase that catalyzes the conversion of O-acetyl-L-serine (OAS) into cysteine, the last step in the cysteine biosynthesis pathway. However, this CS-like protein is unlikely to function in cysteine biosynthesis. It seems that in S.cerevisiae cysteine biosynthesis occurs exclusively through the cystathionine pathway and not via direct incorporation of sulfur into OAS. This Saccharomyces cerevisiae (strain ATCC 204508 / S288c) (Baker's yeast) protein is Putative mitochondrial cysteine synthase.